An 89-amino-acid polypeptide reads, in one-letter code: Co-chaperonin GroES (89 aa).

It belongs to the GroES chaperonin family. As to quaternary structure, heptamer of 7 subunits arranged in a ring. Interacts with the chaperonin GroEL.

It is found in the cytoplasm. Its function is as follows. Together with the chaperonin GroEL, plays an essential role in assisting protein folding. The GroEL-GroES system forms a nano-cage that allows encapsulation of the non-native substrate proteins and provides a physical environment optimized to promote and accelerate protein folding. GroES binds to the apical surface of the GroEL ring, thereby capping the opening of the GroEL channel. The polypeptide is Co-chaperonin GroES (Wolinella succinogenes (strain ATCC 29543 / DSM 1740 / CCUG 13145 / JCM 31913 / LMG 7466 / NCTC 11488 / FDC 602W) (Vibrio succinogenes)).